The primary structure comprises 505 residues: Glucan endo-1,3-beta-glucosidase 4 (505 aa).

A signal peptide spans 1 to 23 (MLLPRWFAEALLLLLSILACSNA). N-linked (GlcNAc...) asparagine glycans are attached at residues N70 and N110. The active-site Proton donor is E119. N-linked (GlcNAc...) asparagine glycans are attached at residues N178 and N256. Catalysis depends on E266, which acts as the Nucleophile. Residues N298, N338, and N357 are each glycosylated (N-linked (GlcNAc...) asparagine). C363 and C426 form a disulfide bridge. N-linked (GlcNAc...) asparagine glycosylation is present at N453. Residue A474 is the site of GPI-anchor amidated alanine attachment. The propeptide at 475 to 505 (NARIIFSYHLPILAPLALTLLQLLLQHDRLL) is removed in mature form.

Belongs to the glycosyl hydrolase 17 family. Post-translationally, contains two additional disulfide bonds.

Its subcellular location is the cell membrane. The enzyme catalyses Hydrolysis of (1-&gt;3)-beta-D-glucosidic linkages in (1-&gt;3)-beta-D-glucans.. The chain is Glucan endo-1,3-beta-glucosidase 4 from Arabidopsis thaliana (Mouse-ear cress).